We begin with the raw amino-acid sequence, 135 residues long: Transcription antitermination protein NusB (135 aa).

This sequence belongs to the NusB family.

Involved in transcription antitermination. Required for transcription of ribosomal RNA (rRNA) genes. Binds specifically to the boxA antiterminator sequence of the ribosomal RNA (rrn) operons. The sequence is that of Transcription antitermination protein NusB from Shewanella pealeana (strain ATCC 700345 / ANG-SQ1).